The chain runs to 385 residues: Glucans biosynthesis protein C (385 aa).

The next 10 membrane-spanning stretches (helical) occupy residues 17 to 37 (AWLMLLGIPFHISLIYSSHTW), 60 to 80 (MQVFFVISGYFSYMLFLRYPL), 91 to 111 (VGIPMLTAIPLLTLPQFIMLQ), 137 to 157 (ISHLWFLLVLVVMTTLCVWIF), 173 to 193 (KFSMVKLSVIFLCLGIGYAVI), 212 to 232 (FIVMQTLFYLPFFILGALAFI), 239 to 259 (LFTTPSRGCTLAAALAFVAYL), 274 to 294 (TESVITMVLGLWMVNVVFSFG), 311 to 331 (ASLFIYLVHHPLTLFFGAYIT), and 338 to 358 (WLGFLCGLIFVVGIAIILYEI).

It belongs to the acyltransferase 3 family. OpgC subfamily.

The protein localises to the cell membrane. It participates in glycan metabolism; osmoregulated periplasmic glucan (OPG) biosynthesis. In terms of biological role, necessary for the succinyl substitution of periplasmic glucans. Could catalyze the transfer of succinyl residues from the cytoplasmic side of the membrane to the nascent glucan backbones on the periplasmic side of the membrane. The chain is Glucans biosynthesis protein C from Escherichia coli (strain SMS-3-5 / SECEC).